The primary structure comprises 193 residues: Penicillin-binding protein activator LpoB (193 aa).

An N-terminal signal peptide occupies residues 1–16 (MKKMLFVVAAVFLLAG). Residue cysteine 17 is the site of N-palmitoyl cysteine attachment. Cysteine 17 is lipidated: S-diacylglycerol cysteine. The interval 23–50 (QQPPAPVEPVTPTEPTEPPKPIEPPIEV) is disordered. The segment covering 37–46 (PTEPPKPIEP) has biased composition (pro residues).

Belongs to the LpoB family. In terms of assembly, interacts with PBP1b.

The protein localises to the cell outer membrane. Its function is as follows. Regulator of peptidoglycan synthesis that is essential for the function of penicillin-binding protein 1B (PBP1b). The protein is Penicillin-binding protein activator LpoB of Proteus mirabilis (strain HI4320).